The chain runs to 486 residues: Putative ankyrin repeat protein R634 (486 aa).

ANK repeat units follow at residues 84 to 113, 114 to 143, 145 to 173, 174 to 203, 205 to 233, 234 to 263, 265 to 293, 307 to 336, 337 to 366, 367 to 396, 398 to 426, and 427 to 456; these read DLFKYVIEFCISGKLDSIKRLVSMGANVRE, HNDVALNRAVENGHMDIFEYLISKGADLYA, KNTLVRCASYGGNLDMVKYLISIGANFRE, NCDTPLIWACHNGHLEIVKYLVDQGADVNS, SHKSIITASKMGHLGIVKYLVSKTTNIDW, RHNYAAAFAAQNNHLEIVKYLVNEGANLEI, DGCIIRVAAKNGHLDIVKYLVSLGMEIGF, NKITPVIGSAVEGGHLSMVKYFVSIGATIK, EKNYAFVKAAEYGHLEIIKYLVSQGISLEK, KINKALIVACSKGHLEIVKYLVENGANVKT, EGLPLRQACWGNYLDIAKYLVSNGADVTS, and YDNYALKTALEKGDLETVKYFIYVGANVND.

The chain is Putative ankyrin repeat protein R634 from Acanthamoeba polyphaga (Amoeba).